A 60-amino-acid chain; its full sequence is MSKKLEITLNRSVIGGTGVQKKTVEALGLKKIRQSVVREDTPAVRGMVNRVSHLLTVKEV.

The protein belongs to the universal ribosomal protein uL30 family. As to quaternary structure, part of the 50S ribosomal subunit.

The sequence is that of Large ribosomal subunit protein uL30 from Oceanobacillus iheyensis (strain DSM 14371 / CIP 107618 / JCM 11309 / KCTC 3954 / HTE831).